Here is a 312-residue protein sequence, read N- to C-terminus: Glyoxylate/hydroxypyruvate reductase A (312 aa).

Residue R227 is part of the active site. Catalysis depends on H275, which acts as the Proton donor.

This sequence belongs to the D-isomer specific 2-hydroxyacid dehydrogenase family. GhrA subfamily.

The protein localises to the cytoplasm. It carries out the reaction glycolate + NADP(+) = glyoxylate + NADPH + H(+). The catalysed reaction is (R)-glycerate + NAD(+) = 3-hydroxypyruvate + NADH + H(+). The enzyme catalyses (R)-glycerate + NADP(+) = 3-hydroxypyruvate + NADPH + H(+). In terms of biological role, catalyzes the NADPH-dependent reduction of glyoxylate and hydroxypyruvate into glycolate and glycerate, respectively. This Escherichia coli O6:K15:H31 (strain 536 / UPEC) protein is Glyoxylate/hydroxypyruvate reductase A.